A 260-amino-acid chain; its full sequence is Phosphatidate cytidylyltransferase (260 aa).

7 helical membrane passes run 9–29, 46–66, 70–90, 102–122, 130–150, 172–192, and 196–216; these read IIAL…LMLF, MIKF…IIML, AGSW…FILL, FMDA…FMYL, LHYI…AYIF, FVGG…FVDF, and LWLL…GDLV.

Belongs to the CDS family.

The protein resides in the cell membrane. The enzyme catalyses a 1,2-diacyl-sn-glycero-3-phosphate + CTP + H(+) = a CDP-1,2-diacyl-sn-glycerol + diphosphate. Its pathway is phospholipid metabolism; CDP-diacylglycerol biosynthesis; CDP-diacylglycerol from sn-glycerol 3-phosphate: step 3/3. This Staphylococcus saprophyticus subsp. saprophyticus (strain ATCC 15305 / DSM 20229 / NCIMB 8711 / NCTC 7292 / S-41) protein is Phosphatidate cytidylyltransferase (cdsA).